Reading from the N-terminus, the 252-residue chain is Phosphoglycolate phosphatase (252 aa).

The Nucleophile role is filled by aspartate 13. The Mg(2+) site is built by aspartate 13, aspartate 15, and aspartate 192.

The protein belongs to the HAD-like hydrolase superfamily. CbbY/CbbZ/Gph/YieH family. Monomer. Mg(2+) is required as a cofactor. The cofactor is chloride.

The catalysed reaction is 2-phosphoglycolate + H2O = glycolate + phosphate. It functions in the pathway organic acid metabolism; glycolate biosynthesis; glycolate from 2-phosphoglycolate: step 1/1. Functionally, specifically catalyzes the dephosphorylation of 2-phosphoglycolate. Is involved in the dissimilation of the intracellular 2-phosphoglycolate formed during the DNA repair of 3'-phosphoglycolate ends, a major class of DNA lesions induced by oxidative stress. The polypeptide is Phosphoglycolate phosphatase (Shigella boydii serotype 4 (strain Sb227)).